A 446-amino-acid polypeptide reads, in one-letter code: Putative ZDHHC-type palmitoyltransferase 2 (446 aa).

Disordered stretches follow at residues 1–33 and 56–83; these read MNLY…INNN and QIIN…HNNP. N-linked (GlcNAc...) asparagine glycans are attached at residues asparagine 5, asparagine 8, asparagine 14, and asparagine 21. Low complexity predominate over residues 56-81; the sequence is QIINKNNNNNHNRNNNNNNNNNNNHN. Residues asparagine 141, asparagine 145, asparagine 159, and asparagine 165 are each glycosylated (N-linked (GlcNAc...) asparagine). The next 5 helical transmembrane spans lie at 178-198, 210-230, 305-325, 349-369, and 410-430; these read IVIF…IFPW, IHSF…YLCS, YFVL…TLLI, LFLL…IMAL, and IISN…LPTI. The region spanning 261-311 is the DHHC domain; sequence KWCNKCNHQKPERAHHCRYCNRCVLRMDHHCQWLQNCIGLFNQKYFVLFLF.

Belongs to the DHHC palmitoyltransferase family.

It localises to the membrane. It catalyses the reaction L-cysteinyl-[protein] + hexadecanoyl-CoA = S-hexadecanoyl-L-cysteinyl-[protein] + CoA. The sequence is that of Putative ZDHHC-type palmitoyltransferase 2 from Dictyostelium discoideum (Social amoeba).